The primary structure comprises 1123 residues: Nicotinic receptor-associated protein 4 (1123 aa).

The first 18 residues, Met1–Ala18, serve as a signal peptide directing secretion. Residues Asn19 to Asp1071 are Lumenal-facing. A helical transmembrane segment spans residues Ile1072 to Asn1092. At Gln1093–Lys1123 the chain is on the cytoplasmic side.

As to quaternary structure, may interact with nra-2 in the ER. As to expression, expressed in body wall, pharyngeal, uterine and vulval muscles, motor neurons, nerve ring, motor and ventral cord neurons, hypodermal cells in the tail, vulval epithelium and intestine.

Its subcellular location is the endoplasmic reticulum membrane. Involved in the recognition and selection of protein complexes to exit the endoplasmic reticulum (ER). In muscles, regulates levamisole-sensitive nicotinic acetylcholine receptor (L-AChR) subunit composition, possibly by allowing only specific L-AChR subunit combinations to exit the ER. Specifically, may promote the inclusion of alpha subunit unc-38 into and the exclusion of unc-29 from L-AChR. Regulates L-AChR sensitivity to agonists such as nicotine and levamisole at neuro-muscular junctions. The polypeptide is Nicotinic receptor-associated protein 4 (Caenorhabditis elegans).